Here is a 109-residue protein sequence, read N- to C-terminus: uncharacterized protein (109 aa).

This is an uncharacterized protein from Mycobacterium tuberculosis (strain CDC 1551 / Oshkosh).